A 152-amino-acid polypeptide reads, in one-letter code: MGLSTLEQKLTEMLSAPVEALGFELVGIEFIRARQSTLRIYIDSENGINVDDCADVSHQVSAVLDVEEPITVAYNLEVSSPGLDRPMFTAEHYTRFLGDEVSLVLRMAVQNRRKWQGIIKSVDGEMITVAVEGKDEVFALSNIQKANLVPHF.

This sequence belongs to the RimP family.

The protein resides in the cytoplasm. Functionally, required for maturation of 30S ribosomal subunits. This chain is Ribosome maturation factor RimP, found in Serratia proteamaculans (strain 568).